We begin with the raw amino-acid sequence, 212 residues long: FMN-dependent NAD(P)H:quinone oxidoreductase 1 (212 aa).

Residues Ser10, 16-18, and 97-100 each bind FMN; these read SQS and MYNF. Substrate contacts are provided by Asn99 and Tyr131. FMN contacts are provided by residues 145 to 148 and Glu187; that span reads SRGG. Glu188 contributes to the substrate binding site.

The protein belongs to the azoreductase type 1 family. Homodimer. Homotetramer formed by a dimer of dimers when the ionic strength is high. FMN is required as a cofactor.

It catalyses the reaction 2 a quinone + NADPH + H(+) = 2 a 1,4-benzosemiquinone + NADP(+). The catalysed reaction is 2 a quinone + NADH + H(+) = 2 a 1,4-benzosemiquinone + NAD(+). It carries out the reaction N,N-dimethyl-1,4-phenylenediamine + anthranilate + 2 NAD(+) = 2-(4-dimethylaminophenyl)diazenylbenzoate + 2 NADH + 2 H(+). With respect to regulation, azoreductase activity increases with salt strength. In terms of biological role, quinone reductase that provides resistance to thiol-specific stress caused by electrophilic quinones. Shows a preference for benzoquinones. Its function is as follows. Also exhibits azoreductase activity. Catalyzes the reductive cleavage of the azo bond in aromatic azo compounds to the corresponding amines. NADPH is the preferred electron donor for azoreductase activity, but it can also use NADH. Can reduce different classes of azo dyes, including the common azo dyes methyl red and p-aminoazobenzene sulfonamide (PAABSA). Can activate several azo pro-drugs used in the treatment of inflammatory bowel disease (IBD), including balsalazide, sulfasalazine and olsalazine. Also acts as a nitrodeductase, and can reduce and hence activate the nitroaromatic drug nitrofurazone, a broad spectrum antibiotic. The sequence is that of FMN-dependent NAD(P)H:quinone oxidoreductase 1 from Pseudomonas aeruginosa (strain ATCC 15692 / DSM 22644 / CIP 104116 / JCM 14847 / LMG 12228 / 1C / PRS 101 / PAO1).